A 335-amino-acid polypeptide reads, in one-letter code: Biotin synthase (335 aa).

A Radical SAM core domain is found at 51-281 (YRVQLASLLS…RSRVRLSAGR (231 aa)). Residues Cys-66, Cys-70, and Cys-73 each contribute to the [4Fe-4S] cluster site. The [2Fe-2S] cluster site is built by Cys-112, Cys-144, Cys-204, and Arg-276.

This sequence belongs to the radical SAM superfamily. Biotin synthase family. Homodimer. The cofactor is [4Fe-4S] cluster. [2Fe-2S] cluster serves as cofactor.

It carries out the reaction (4R,5S)-dethiobiotin + (sulfur carrier)-SH + 2 reduced [2Fe-2S]-[ferredoxin] + 2 S-adenosyl-L-methionine = (sulfur carrier)-H + biotin + 2 5'-deoxyadenosine + 2 L-methionine + 2 oxidized [2Fe-2S]-[ferredoxin]. It functions in the pathway cofactor biosynthesis; biotin biosynthesis; biotin from 7,8-diaminononanoate: step 2/2. In terms of biological role, catalyzes the conversion of dethiobiotin (DTB) to biotin by the insertion of a sulfur atom into dethiobiotin via a radical-based mechanism. In Prochlorococcus marinus (strain MIT 9303), this protein is Biotin synthase.